We begin with the raw amino-acid sequence, 351 residues long: Protein-glutamate methylesterase/protein-glutamine glutaminase 2 (351 aa).

The Response regulatory domain maps to 4–121; that stretch reads KVLVVDDSAL…PQDFNEYQDL (118 aa). Asp-55 is modified (4-aspartylphosphate). The CheB-type methylesterase domain occupies 156–348; sequence RVINTQLVAI…DKMLNYLASL (193 aa). Residues Ser-168, His-194, and Asp-290 contribute to the active site.

The protein belongs to the CheB family. In terms of processing, phosphorylated by CheA. Phosphorylation of the N-terminal regulatory domain activates the methylesterase activity.

Its subcellular location is the cytoplasm. The enzyme catalyses [protein]-L-glutamate 5-O-methyl ester + H2O = L-glutamyl-[protein] + methanol + H(+). The catalysed reaction is L-glutaminyl-[protein] + H2O = L-glutamyl-[protein] + NH4(+). Functionally, involved in chemotaxis. Part of a chemotaxis signal transduction system that modulates chemotaxis in response to various stimuli. Catalyzes the demethylation of specific methylglutamate residues introduced into the chemoreceptors (methyl-accepting chemotaxis proteins or MCP) by CheR. Also mediates the irreversible deamidation of specific glutamine residues to glutamic acid. This chain is Protein-glutamate methylesterase/protein-glutamine glutaminase 2, found in Shewanella sp. (strain MR-4).